The primary structure comprises 948 residues: MYGSARSVGKVEPSSQSPGRSPRLPRSPRLGHRRTNSTGGSSGNSVGGGSGKTLSMENIQSLNAAYATSGPMYLSDHENVGAETPKSTMTLGRSGGRLPYGVRMTAMGSSPNIASSGVASDTIAFGEHHLPPVSMASTVPHSLRQARDNTIMDLQTQLKEVLRENDLLRKDVEVKESKLSSSMNSIKTFWSPELKKERALRKDEASKITIWKEQYRVVQEENQHMQMTIQALQDELRIQRDLNQLFQQDSSSRTGEPCVAELTEENFQRLHAEHERQAKELFLLRKTLEEMELRIETQKQTLNARDESIKKLLEMLQSKGLSAKATEEDHERTRRLAEAEMHVHHLESLLEQKEKENNMLREEMHRRFENAPDSAKTKALQTVIEMKDSKISSMERGLRDLEEEIQMLKSNGALSTEEREEEMKQMEVYRSHSKFMKNKIGQVKQELSRKDTELLALQTKLETLTNQFSDSKQHIEVLKESLTAKEQRAAILQTEVDALRLRLEEKETMLNKKTKQIQDMAEEKGTQAGEIHDLKDMLDVKERKVNVLQKKIENLQEQLRDKEKQMSSLKERVKSLQADTTNTDTALTTLEEALADKERTIERLKEQRDRDEREKQEEIDTYKKDLKDLKEKVSLLQGDLSEKEASLLDLKEHASSLASSGLKKDSRLKTLEIALEQKKEECLKMESQLKKAHEATLEARASPEMSDRIQQLEREIARYKDESSKAQTEVDRLLEILKEVENEKNDKDKKIAELESLTSRQVKDQNKKVANLKHKEQVEKKKSAQMLEEARRREDSLSDSSQQLQVEELLMAMEKVKQELESMKAKLSSTQQSLAEKETHLTNLRAERRKHLEEVLEMKQEALLAAISEKDANIALLELSSSKKKTQEEVAALKREKDRLVQQLKQQTQNRMKLMADNYEDDHFRSSRSNQTNHKPSPDQDEEEGIWA.

The segment at 1–54 (MYGSARSVGKVEPSSQSPGRSPRLPRSPRLGHRRTNSTGGSSGNSVGGGSGKTL) is disordered. An N6-acetyllysine modification is found at lysine 10. Low complexity predominate over residues 13 to 28 (PSSQSPGRSPRLPRSP). Phosphoserine is present on residues serine 17, serine 21, and serine 37. The residue at position 38 (threonine 38) is a Phosphothreonine. The segment covering 40–51 (GSSGNSVGGGSG) has biased composition (gly residues). A phosphoserine mark is found at serine 55, serine 75, serine 94, serine 796, and serine 937. Residues 144–920 (RQARDNTIMD…RMKLMADNYE (777 aa)) are a coiled coil. Residues 773-796 (KHKEQVEKKKSAQMLEEARRREDS) are compositionally biased toward basic and acidic residues. 2 disordered regions span residues 773 to 801 (KHKE…SDSS) and 903 to 948 (QLKQ…GIWA). Over residues 939 to 948 (DQDEEEGIWA) the composition is skewed to acidic residues.

In terms of assembly, interacts with the GTB-bound forms of RAB6A isoform 1 and isoform 2 and with RAB6B. The interaction was strongest with RAB6B, followed by RAB6A isoform 2 and weakest with RAB6A isoform 1. Part of a complex with CHUK, IKBKB and IKBKG. Interacts with CHUK, IKBKB and IKBKG. The interaction with IKBKG is independent of CHUK and IKBKB. Interacts with NFKBIA. Isoform 1 interacts through its C-terminus with the PDZ domains of RIMS1 and RIMS2. Interacts with ERC2/CAST1. Interacts with SDCCAG8. Part of a cortical microtubule stabilization complex (CMSC) composed of KANK1, PPFIA1, PPFIBP1, ERC1/ELKS, PHLDB2/LL5beta, CLASPs, KIF21A and possibly additional interactors; within CMSCs KANK1 and PHLDB2/LL5beta appear to be the core components for targeting of microtubule-binding proteins KIF21A and CLASPs, whereas PPFIA1, PPFIBP1 and ERC1/ELKS serve as scaffolds for protein clustering. As to expression, isoform 1 is specifically expressed in brain. A further probable isoform is widely expressed outside of brain It is referred to as ERC1a by PubMed:12391317 and characterized by a C-terminus identical to that of isoforms 1 in human and mouse.

The protein localises to the cytoplasm. The protein resides in the cytoskeleton. It is found in the microtubule organizing center. Its subcellular location is the centrosome. It localises to the membrane. The protein localises to the golgi apparatus membrane. The protein resides in the presynaptic active zone. It is found in the cell projection. Its subcellular location is the podosome. Regulatory subunit of the IKK complex. Probably recruits IkappaBalpha/NFKBIA to the complex. May be involved in the organization of the cytomatrix at the nerve terminals active zone (CAZ) which regulates neurotransmitter release. May be involved in vesicle trafficking at the CAZ. May be involved in Rab-6 regulated endosomes to Golgi transport. The protein is ELKS/Rab6-interacting/CAST family member 1 (Erc1) of Rattus norvegicus (Rat).